Consider the following 362-residue polypeptide: 11-beta-hydroxysteroid dehydrogenase B (362 aa).

Residues 10 to 30 traverse the membrane as a helical; Signal-anchor for type II membrane protein segment; sequence FVVPPASLLMLAFTWPTLFFI. Residues 13 to 26 carry the Proline-knob motif; sequence PPASLLMLAFTWPT. 55 to 81 lines the NADP(+) pocket; it reads GASSGIGEQIAYQYAKRGANLVLVARR. Serine 185 is a substrate binding site. The active-site Proton acceptor is tyrosine 198. NADP(+) contacts are provided by residues 198–202 and lysine 202; that span reads YSAAK. Residues 321–362 form a disordered region; it reads TGRPLLETSSPRRSAVMEGSSPRRLPPGPLTFSPAFQQQKSE.

The protein belongs to the short-chain dehydrogenases/reductases (SDR) family. Expressed in seeds (at protein level). Not expressed in stem, leaf or root (at protein level).

The protein resides in the lipid droplet. Its subcellular location is the membrane. It catalyses the reaction an 11beta-hydroxysteroid + NADP(+) = an 11-oxosteroid + NADPH + H(+). It carries out the reaction corticosterone + NADP(+) = 11-dehydrocorticosterone + NADPH + H(+). The enzyme catalyses 17beta-estradiol + NADP(+) = estrone + NADPH + H(+). In terms of biological role, has dehydrogenase activity against corticosterone (11 beta-hydroxysteroid) and estradiol (17 beta-hydroxysteroid), with similar activities to both sterols in the presence of NADP(+), but negligible activity to either sterol in the presence of NAD(+). May be involved in signal transduction regulated by various sterols. This chain is 11-beta-hydroxysteroid dehydrogenase B, found in Sesamum indicum (Oriental sesame).